A 257-amino-acid polypeptide reads, in one-letter code: OCIA domain-containing protein 1 (257 aa).

Disordered regions lie at residues 1 to 20 (MDSP…PHPL) and 148 to 257 (YSDE…SWTD). The OCIA domain maps to 1–110 (MDSPLNDGSH…MRLPNSHLGE (110 aa)). The span at 156–170 (GRSTSLNLDTESRPT) shows a compositional bias: polar residues. Positions 204 to 216 (EDLRRRNREEYSK) are enriched in basic and acidic residues.

Belongs to the OCIAD1 family. As to quaternary structure, interacts with STAT3 and ARF1. As to expression, expressed in all cells of the primary lymph gland lobe.

It localises to the endosome. Maintains stem cell potency. Involved in endocytic pathways that mediate signaling during hematopoiesis. In Drosophila melanogaster (Fruit fly), this protein is OCIA domain-containing protein 1 (asrij).